The primary structure comprises 114 residues: Chaperonin GroEL (114 aa).

22–26 (DGTTT) contacts ATP.

The protein belongs to the chaperonin (HSP60) family. In terms of assembly, forms a cylinder of 14 subunits composed of two heptameric rings stacked back-to-back. Interacts with the co-chaperonin GroES.

The protein localises to the cytoplasm. It carries out the reaction ATP + H2O + a folded polypeptide = ADP + phosphate + an unfolded polypeptide.. Functionally, together with its co-chaperonin GroES, plays an essential role in assisting protein folding. The GroEL-GroES system forms a nano-cage that allows encapsulation of the non-native substrate proteins and provides a physical environment optimized to promote and accelerate protein folding. This is Chaperonin GroEL from Mycobacterium ulcerans.